Here is a 99-residue protein sequence, read N- to C-terminus: Protein translation factor SUI1 homolog (99 aa).

Belongs to the SUI1 family.

This is Protein translation factor SUI1 homolog from Pyrococcus horikoshii (strain ATCC 700860 / DSM 12428 / JCM 9974 / NBRC 100139 / OT-3).